A 260-amino-acid polypeptide reads, in one-letter code: Snake venom serine protease homolog KN4 (260 aa).

The N-terminal stretch at 1–18 (MVLIRVLANLLILQLSYA) is a signal peptide. A propeptide spanning residues 19–24 (QKSSEL) is cleaved from the precursor. In terms of domain architecture, Peptidase S1 spans 25–251 (IIGGDECNIN…HLDWIQNIIA (227 aa)). Cystine bridges form between Cys-31/Cys-165, Cys-52/Cys-68, Cys-100/Cys-258, Cys-144/Cys-212, Cys-176/Cys-191, and Cys-202/Cys-227. 5 N-linked (GlcNAc...) asparagine glycosylation sites follow: Asn-83, Asn-123, Asn-124, Asn-156, and Asn-172. A glycan (N-linked (GlcNAc...) asparagine) is linked at Asn-253.

It belongs to the peptidase S1 family. Snake venom subfamily. As to expression, expressed by the venom gland.

The protein localises to the secreted. Snake venom serine protease homolog that may act in the hemostasis system of the prey. The protein is Snake venom serine protease homolog KN4 of Trimeresurus stejnegeri (Chinese green tree viper).